A 272-amino-acid chain; its full sequence is NH(3)-dependent NAD(+) synthetase (272 aa).

45 to 52 (GISGGQDS) is a binding site for ATP. Residue Asp-51 coordinates Mg(2+). Arg-138 serves as a coordination point for deamido-NAD(+). Thr-158 is a binding site for ATP. Residue Glu-163 participates in Mg(2+) binding. Deamido-NAD(+) contacts are provided by Lys-171 and Asp-178. ATP-binding residues include Lys-187 and Thr-209. 258 to 259 (HK) provides a ligand contact to deamido-NAD(+).

This sequence belongs to the NAD synthetase family. As to quaternary structure, homodimer.

The enzyme catalyses deamido-NAD(+) + NH4(+) + ATP = AMP + diphosphate + NAD(+) + H(+). Its pathway is cofactor biosynthesis; NAD(+) biosynthesis; NAD(+) from deamido-NAD(+) (ammonia route): step 1/1. Its function is as follows. Catalyzes the ATP-dependent amidation of deamido-NAD to form NAD. Uses ammonia as a nitrogen source. The chain is NH(3)-dependent NAD(+) synthetase from Bacillus cereus (strain ATCC 10987 / NRS 248).